The sequence spans 242 residues: Biosynthetic peptidoglycan transglycosylase (242 aa).

Residues 19-39 (LMVVLAVFWGGGIALFSVAPV) traverse the membrane as a helical segment.

The protein belongs to the glycosyltransferase 51 family.

The protein resides in the cell inner membrane. It catalyses the reaction [GlcNAc-(1-&gt;4)-Mur2Ac(oyl-L-Ala-gamma-D-Glu-L-Lys-D-Ala-D-Ala)](n)-di-trans,octa-cis-undecaprenyl diphosphate + beta-D-GlcNAc-(1-&gt;4)-Mur2Ac(oyl-L-Ala-gamma-D-Glu-L-Lys-D-Ala-D-Ala)-di-trans,octa-cis-undecaprenyl diphosphate = [GlcNAc-(1-&gt;4)-Mur2Ac(oyl-L-Ala-gamma-D-Glu-L-Lys-D-Ala-D-Ala)](n+1)-di-trans,octa-cis-undecaprenyl diphosphate + di-trans,octa-cis-undecaprenyl diphosphate + H(+). Its pathway is cell wall biogenesis; peptidoglycan biosynthesis. Peptidoglycan polymerase that catalyzes glycan chain elongation from lipid-linked precursors. The polypeptide is Biosynthetic peptidoglycan transglycosylase (Escherichia coli O139:H28 (strain E24377A / ETEC)).